The primary structure comprises 907 residues: Protein translocase subunit SecA (907 aa).

Residues glutamine 87, glycine 105 to threonine 109, and aspartate 513 contribute to the ATP site. Residues glutamate 841–arginine 853 are compositionally biased toward basic and acidic residues. Residues glutamate 841–asparagine 907 are disordered. A compositionally biased stretch (low complexity) spans arginine 854–glutamine 865. Positions glutamate 872–arginine 887 are enriched in basic and acidic residues. Zn(2+)-binding residues include cysteine 891, cysteine 893, cysteine 902, and histidine 903.

It belongs to the SecA family. As to quaternary structure, monomer and homodimer. Part of the essential Sec protein translocation apparatus which comprises SecA, SecYEG and auxiliary proteins SecDF-YajC and YidC. Requires Zn(2+) as cofactor.

Its subcellular location is the cell inner membrane. It localises to the cytoplasm. It catalyses the reaction ATP + H2O + cellular proteinSide 1 = ADP + phosphate + cellular proteinSide 2.. Functionally, part of the Sec protein translocase complex. Interacts with the SecYEG preprotein conducting channel. Has a central role in coupling the hydrolysis of ATP to the transfer of proteins into and across the cell membrane, serving both as a receptor for the preprotein-SecB complex and as an ATP-driven molecular motor driving the stepwise translocation of polypeptide chains across the membrane. This chain is Protein translocase subunit SecA, found in Vibrio vulnificus (strain YJ016).